Reading from the N-terminus, the 380-residue chain is Methenyltetrahydrofolate synthase domain-containing protein (380 aa).

Over residues 245 to 258 (EEQAGKDVTLRDGP) the composition is skewed to basic and acidic residues. Disordered stretches follow at residues 245–283 (EEQA…PLSS) and 361–380 (LVGS…IAGP). The region spanning 282-355 (SSVQIGNLPR…NTVRVVLARQ (74 aa)) is the RRM domain.

In Bos taurus (Bovine), this protein is Methenyltetrahydrofolate synthase domain-containing protein (MTHFSD).